A 264-amino-acid polypeptide reads, in one-letter code: S-adenosylmethionine decarboxylase proenzyme (264 aa).

The active-site Schiff-base intermediate with substrate; via pyruvic acid is the Ser112. A Pyruvic acid (Ser); by autocatalysis modification is found at Ser112. Residue His117 is the Proton acceptor; for processing activity of the active site. The active-site Proton donor; for catalytic activity is the Cys140.

Belongs to the prokaryotic AdoMetDC family. Type 2 subfamily. Heterooctamer of four alpha and four beta chains arranged as a tetramer of alpha/beta heterodimers. Pyruvate is required as a cofactor. Post-translationally, is synthesized initially as an inactive proenzyme. Formation of the active enzyme involves a self-maturation process in which the active site pyruvoyl group is generated from an internal serine residue via an autocatalytic post-translational modification. Two non-identical subunits are generated from the proenzyme in this reaction, and the pyruvate is formed at the N-terminus of the alpha chain, which is derived from the carboxyl end of the proenzyme. The post-translation cleavage follows an unusual pathway, termed non-hydrolytic serinolysis, in which the side chain hydroxyl group of the serine supplies its oxygen atom to form the C-terminus of the beta chain, while the remainder of the serine residue undergoes an oxidative deamination to produce ammonia and the pyruvoyl group blocking the N-terminus of the alpha chain.

It catalyses the reaction S-adenosyl-L-methionine + H(+) = S-adenosyl 3-(methylsulfanyl)propylamine + CO2. It participates in amine and polyamine biosynthesis; S-adenosylmethioninamine biosynthesis; S-adenosylmethioninamine from S-adenosyl-L-methionine: step 1/1. Its function is as follows. Catalyzes the decarboxylation of S-adenosylmethionine to S-adenosylmethioninamine (dcAdoMet), the propylamine donor required for the synthesis of the polyamines spermine and spermidine from the diamine putrescine. The polypeptide is S-adenosylmethionine decarboxylase proenzyme (Salmonella gallinarum (strain 287/91 / NCTC 13346)).